We begin with the raw amino-acid sequence, 367 residues long: snRNA-activating protein complex subunit 1 (367 aa).

The segment at 1-168 (MGTPPGLQTD…EEFKDPSDRV (168 aa)) is SNAPC3-binding. The tract at residues 164–268 (PSDRVMKLIT…AESLAKIKSK (105 aa)) is SNAPC4-binding. Disordered regions lie at residues 228-254 (KDRK…QETE) and 278-367 (KSRR…KRKH). Basic and acidic residues predominate over residues 238-254 (KINDGEEKMEGNSQETE). S289 and S290 each carry phosphoserine. Residues 292–301 (CDSASGQGQV) show a composition bias toward polar residues.

As to quaternary structure, part of the SNAPc complex composed of 5 subunits: SNAPC1, SNAPC2, SNAPC3, SNAPC4 and SNAPC5. SNAPC1 interacts with SNAPC3, SNAPC4 and TBP.

It is found in the nucleus. Its function is as follows. Part of the SNAPc complex required for the transcription of both RNA polymerase II and III small-nuclear RNA genes. Binds to the proximal sequence element (PSE), a non-TATA-box basal promoter element common to these 2 types of genes. Recruits TBP and BRF2 to the U6 snRNA TATA box. In Macaca fascicularis (Crab-eating macaque), this protein is snRNA-activating protein complex subunit 1 (SNAPC1).